Reading from the N-terminus, the 814-residue chain is Cellulase/esterase CelE (814 aa).

Positions 1-34 (MKKIVSLVCVLVMLVSILGSFSVVAASPVKGFQV) are cleaved as a signal peptide. Residues 35 to 354 (SGTKLLDASG…AVFWWDNGYY (320 aa)) are cellulase. E193 (proton donor; for cellulase activity) is an active-site residue. E316 (nucleophile; for cellulase activity) is an active-site residue. The Dockerin domain maps to 409–479 (ANILYGDVNG…LLRSIDKFPA (71 aa)). Ca(2+) is bound by residues D415, N417, D419, G420, K421, D426, D451, V452, N453, D455, K457, and D462. The tract at residues 490-814 (PGILYNGRFD…TAEIKNKLGW (325 aa)) is esterase. S612 acts as the Nucleophile; for esterase activity in catalysis.

In the N-terminal section; belongs to the glycosyl hydrolase 5 (cellulase A) family. This sequence in the C-terminal section; belongs to the carbohydrate esterase 2 (CE2) family.

Its subcellular location is the secreted. It carries out the reaction Endohydrolysis of (1-&gt;4)-beta-D-glucosidic linkages in cellulose, lichenin and cereal beta-D-glucans.. The catalysed reaction is Deacetylation of xylans and xylo-oligosaccharides.. The protein operates within glycan metabolism; cellulose degradation. Its pathway is glycan degradation; xylan degradation. With respect to regulation, esterase activity of the CE2 module is inhibited when this domain binds to cellohexaose or beta-glucan. Functionally, multifunctional enzyme involved in the degradation of plant cell wall polysaccharides. Displays endoglucanase activity against carboxymethyl cellulose (CMC) and barley beta-glucan. Also catalyzes the deacetylation of acetylated birchwood xylan and glucomannan, with a preference for the latter, and of the synthetic substrate 4-nitrophenyl acetate (4-NPAc). This is Cellulase/esterase CelE from Acetivibrio thermocellus (strain ATCC 27405 / DSM 1237 / JCM 9322 / NBRC 103400 / NCIMB 10682 / NRRL B-4536 / VPI 7372) (Clostridium thermocellum).